The primary structure comprises 874 residues: UPF0182 protein Sfum_2137 (874 aa).

The next 7 membrane-spanning stretches (helical) occupy residues 7–27 (WPLIILIGILGISAVVILSSL), 57–77 (IVFGAVTLLFFLIFFLNFWVA), 110–130 (SLWVYTPLSLILAVIIALPIF), 171–191 (RRLLIAFVLLLVGLVALYLLE), 208–228 (LHLSILILLIFLIETWDYVLQ), 252–272 (VIWALIWLTLFFLMGTAFSMI), and 283–303 (PLVVFAVGFVLVLGLRYSAFL).

This sequence belongs to the UPF0182 family.

The protein resides in the cell membrane. This is UPF0182 protein Sfum_2137 from Syntrophobacter fumaroxidans (strain DSM 10017 / MPOB).